A 412-amino-acid polypeptide reads, in one-letter code: Diphosphomevalonate decarboxylase MVD1, peroxisomal (412 aa).

23–26 (YWGK) serves as a coordination point for (R)-5-diphosphomevalonate. The short motif at 40–48 (SVTLDPDHL) is the Peroxisomal targeting signal PTS2 element. (R)-5-diphosphomevalonate contacts are provided by residues Arg-78, 161–166 (SGSACR), and Thr-217.

The protein belongs to the diphosphomevalonate decarboxylase family. Homodimer.

The protein resides in the peroxisome. The enzyme catalyses (R)-5-diphosphomevalonate + ATP = isopentenyl diphosphate + ADP + phosphate + CO2. Its pathway is isoprenoid biosynthesis; isopentenyl diphosphate biosynthesis via mevalonate pathway; isopentenyl diphosphate from (R)-mevalonate: step 3/3. Functionally, performs the first committed step in the biosynthesis of isoprene-containing compounds such as sterols and terpenoids. Is specific for (R)-5-diphosphomevalonate (MVAPP). The catalytic efficiency with (R)-5-phosphomevalonate (MVAP) as substrate is 10000-fold lower than for MVAPP. Can complement a yeast mutant defective in MVD activity. The polypeptide is Diphosphomevalonate decarboxylase MVD1, peroxisomal (Arabidopsis thaliana (Mouse-ear cress)).